The primary structure comprises 234 residues: Meiotically up-regulated gene 35 protein (234 aa).

A compositionally biased stretch (basic and acidic residues) spans 126 to 156 (DSSGDLTSTDKERDVSPVSHSEKPYWDRYDL). The tract at residues 126–176 (DSSGDLTSTDKERDVSPVSHSEKPYWDRYDLDQPSNQDVEESRNLVQEPKH) is disordered. S127 and S128 each carry phosphoserine. T132 carries the post-translational modification Phosphothreonine. S141 is subject to Phosphoserine.

It localises to the cytoplasm. Functionally, has a role in meiosis. The protein is Meiotically up-regulated gene 35 protein (mug35) of Schizosaccharomyces pombe (strain 972 / ATCC 24843) (Fission yeast).